Consider the following 341-residue polypeptide: MSAYIAPSQIAQRQLEYFNGKHVLVAGEVEDMFPLELTAHCESVEVFTSNYSYFRQIRHSDKIKSHFGSEFDVETQADMLLLYWPKAKAEAEYLLAMLMAKLGVNTEIVVVGENRSGVKSIEKMFKEYGPVNKYDSARRCSFYWGNCLNEPKPFNQEEWFKSYTVTLGEQSLTVKSLPGVFSHGEFDLGSRLLLETLPNLSGKVLDFGCGAGVLGAFMAKANPEIAIEMCDINAYAITSSQATLEANGLSGRVFASDIYSDTANDYRFIISNPPFHSGLDTNYNAAETLLGHAPQHLSNHGEMIIVANSFLKYPPIIENAFNNCETLNKTNKFSIYYAKKS.

This sequence belongs to the methyltransferase superfamily. RsmC family. As to quaternary structure, monomer.

The protein localises to the cytoplasm. The catalysed reaction is guanosine(1207) in 16S rRNA + S-adenosyl-L-methionine = N(2)-methylguanosine(1207) in 16S rRNA + S-adenosyl-L-homocysteine + H(+). Its function is as follows. Specifically methylates the guanine in position 1207 of 16S rRNA in the 30S particle. In Vibrio parahaemolyticus serotype O3:K6 (strain RIMD 2210633), this protein is Ribosomal RNA small subunit methyltransferase C.